The primary structure comprises 185 residues: Ribosome-recycling factor (185 aa).

Belongs to the RRF family.

It localises to the cytoplasm. Functionally, responsible for the release of ribosomes from messenger RNA at the termination of protein biosynthesis. May increase the efficiency of translation by recycling ribosomes from one round of translation to another. The protein is Ribosome-recycling factor of Methylobacillus flagellatus (strain ATCC 51484 / DSM 6875 / VKM B-1610 / KT).